The chain runs to 39 residues: Photosystem II reaction center protein L (39 aa).

A helical membrane pass occupies residues 18-38; sequence SLYLGLLLVFVTGVLFSSYFF.

The protein belongs to the PsbL family. In terms of assembly, PSII is composed of 1 copy each of membrane proteins PsbA, PsbB, PsbC, PsbD, PsbE, PsbF, PsbH, PsbI, PsbJ, PsbK, PsbL, PsbM, PsbT, PsbX, PsbY, PsbZ, Psb30/Ycf12, at least 3 peripheral proteins of the oxygen-evolving complex and a large number of cofactors. It forms dimeric complexes.

The protein resides in the plastid. It is found in the organellar chromatophore thylakoid membrane. Its function is as follows. One of the components of the core complex of photosystem II (PSII). PSII is a light-driven water:plastoquinone oxidoreductase that uses light energy to abstract electrons from H(2)O, generating O(2) and a proton gradient subsequently used for ATP formation. It consists of a core antenna complex that captures photons, and an electron transfer chain that converts photonic excitation into a charge separation. This subunit is found at the monomer-monomer interface and is required for correct PSII assembly and/or dimerization. The polypeptide is Photosystem II reaction center protein L (Paulinella chromatophora).